The primary structure comprises 739 residues: MSLMLEPNPTQIKEERIYAEMGLTDEEFAMVEKILGRLPNYTETGLFSVMWSEHCSYKNSKPVLRKFPTTGERVLQGPGEGAGIVDIGDNQAVVFKMESHNHPSAIEPYQGAATGVGGIIRDVFSMGARPVALLNSLRFGELQSPRVKYLFEEVVAGIAGYGNCIGIPTVGGEVQFDPCYEGNPLVNAMCVGLINHEDIKKGQAHGAGNTVMYVGASTGRDGIHGATFASEELSESSEAKRPAVQVGDPFMEKLLIEACLELIQSDALVGIQDMGAAGLTSSSAEMASKAGMGIEMYLDDVPQRETGMTPYEMMLSESQERMLIVVKKGREQEIVDLFEKYGLAAVTMGKVTEDKMLRLFHKGEMVAEVPADALAEEAPIYHKPSQEAAYFAEFQQMKMETPKVENYKETLFALLQQPTIASKEWVYDQYDYQVRTSTVVTPGSDAAVVRVRGTEKGLAMTTDCNSRYIYLDPEMGGKIAVAEAARNIVCSGGEPLAITDCLNFGNPEKPEIFWQIEKSVDGMSEACRTLQTPVIGGNVSMYNERSGEAVYPTPTVGMVGLVHDLKHVTTQEFKQAGDLVYIIGETKAEFGGSELQKMLHGKIFGQSPSIDLDVELKRQKQVLAAIQAGLVQSAHDVAEGGLAVAISESAIGANGLGATVKLDGEATAALFAESQSRFVITVKRENKEAFEKAVEAIQVGEVTNTNEVTIHNEENEVLLTANVDEMRKAWKGAIPCLLK.

Residue histidine 54 is part of the active site. Tyrosine 57 and lysine 96 together coordinate ATP. Glutamate 98 is a binding site for Mg(2+). Substrate-binding positions include 99–102 (SHNH) and arginine 121. Residue histidine 100 is the Proton acceptor of the active site. A Mg(2+)-binding site is contributed by aspartate 122. Glutamine 245 contacts substrate. Aspartate 273 serves as a coordination point for Mg(2+). 317–319 (ESQ) provides a ligand contact to substrate. Residues aspartate 500 and glycine 537 each coordinate ATP. Asparagine 538 is a Mg(2+) binding site. Residue serine 540 participates in substrate binding.

This sequence belongs to the FGAMS family. In terms of assembly, monomer. Part of the FGAM synthase complex composed of 1 PurL, 1 PurQ and 2 PurS subunits.

The protein localises to the cytoplasm. The catalysed reaction is N(2)-formyl-N(1)-(5-phospho-beta-D-ribosyl)glycinamide + L-glutamine + ATP + H2O = 2-formamido-N(1)-(5-O-phospho-beta-D-ribosyl)acetamidine + L-glutamate + ADP + phosphate + H(+). It functions in the pathway purine metabolism; IMP biosynthesis via de novo pathway; 5-amino-1-(5-phospho-D-ribosyl)imidazole from N(2)-formyl-N(1)-(5-phospho-D-ribosyl)glycinamide: step 1/2. Part of the phosphoribosylformylglycinamidine synthase complex involved in the purines biosynthetic pathway. Catalyzes the ATP-dependent conversion of formylglycinamide ribonucleotide (FGAR) and glutamine to yield formylglycinamidine ribonucleotide (FGAM) and glutamate. The FGAM synthase complex is composed of three subunits. PurQ produces an ammonia molecule by converting glutamine to glutamate. PurL transfers the ammonia molecule to FGAR to form FGAM in an ATP-dependent manner. PurS interacts with PurQ and PurL and is thought to assist in the transfer of the ammonia molecule from PurQ to PurL. The protein is Phosphoribosylformylglycinamidine synthase subunit PurL of Bacillus cereus (strain AH187).